The following is a 498-amino-acid chain: ATP synthase subunit beta, chloroplastic (498 aa).

Position 172–179 (172–179 (GGAGVGKT)) interacts with ATP.

The protein belongs to the ATPase alpha/beta chains family. F-type ATPases have 2 components, CF(1) - the catalytic core - and CF(0) - the membrane proton channel. CF(1) has five subunits: alpha(3), beta(3), gamma(1), delta(1), epsilon(1). CF(0) has four main subunits: a(1), b(1), b'(1) and c(9-12).

Its subcellular location is the plastid. It localises to the chloroplast thylakoid membrane. The catalysed reaction is ATP + H2O + 4 H(+)(in) = ADP + phosphate + 5 H(+)(out). Produces ATP from ADP in the presence of a proton gradient across the membrane. The catalytic sites are hosted primarily by the beta subunits. The polypeptide is ATP synthase subunit beta, chloroplastic (Nicotiana tabacum (Common tobacco)).